The following is a 427-amino-acid chain: UPF0229 protein YeaH (427 aa).

The segment covering 79-90 has biased composition (basic and acidic residues); sequence NDHFVQNDRIER. The tract at residues 79 to 110 is disordered; that stretch reads NDHFVQNDRIERPQGGGGGSGSGQGQASQDGE. Positions 92–102 are enriched in gly residues; the sequence is QGGGGGSGSGQ.

This sequence belongs to the UPF0229 family.

The chain is UPF0229 protein YeaH from Escherichia coli O139:H28 (strain E24377A / ETEC).